The sequence spans 232 residues: Phosphatidylserine decarboxylase proenzyme (232 aa).

Ser-190 functions as the Schiff-base intermediate with substrate; via pyruvic acid in the catalytic mechanism. Ser-190 carries the pyruvic acid (Ser); by autocatalysis modification.

The protein belongs to the phosphatidylserine decarboxylase family. PSD-A subfamily. In terms of assembly, heterodimer of a large membrane-associated beta subunit and a small pyruvoyl-containing alpha subunit. The cofactor is pyruvate. Is synthesized initially as an inactive proenzyme. Formation of the active enzyme involves a self-maturation process in which the active site pyruvoyl group is generated from an internal serine residue via an autocatalytic post-translational modification. Two non-identical subunits are generated from the proenzyme in this reaction, and the pyruvate is formed at the N-terminus of the alpha chain, which is derived from the carboxyl end of the proenzyme. The post-translation cleavage follows an unusual pathway, termed non-hydrolytic serinolysis, in which the side chain hydroxyl group of the serine supplies its oxygen atom to form the C-terminus of the beta chain, while the remainder of the serine residue undergoes an oxidative deamination to produce ammonia and the pyruvoyl prosthetic group on the alpha chain.

The protein localises to the cell membrane. The enzyme catalyses a 1,2-diacyl-sn-glycero-3-phospho-L-serine + H(+) = a 1,2-diacyl-sn-glycero-3-phosphoethanolamine + CO2. It functions in the pathway phospholipid metabolism; phosphatidylethanolamine biosynthesis; phosphatidylethanolamine from CDP-diacylglycerol: step 2/2. In terms of biological role, catalyzes the formation of phosphatidylethanolamine (PtdEtn) from phosphatidylserine (PtdSer). The protein is Phosphatidylserine decarboxylase proenzyme of Mesorhizobium japonicum (strain LMG 29417 / CECT 9101 / MAFF 303099) (Mesorhizobium loti (strain MAFF 303099)).